Consider the following 397-residue polypeptide: L-asparaginase-like protein GD25160 (397 aa).

The first 22 residues, 1–22 (MLAQSCCLRLLILLLLFTSICS), serve as a signal peptide directing secretion. Intrachain disulfides connect Cys-90–Cys-95, Cys-189–Cys-205, and Cys-344–Cys-371.

It belongs to the Ntn-hydrolase family.

The chain is L-asparaginase-like protein GD25160 from Drosophila simulans (Fruit fly).